The following is a 415-amino-acid chain: Multifunctional CCA protein (415 aa).

Positions 8 and 11 each coordinate ATP. Gly8 and Arg11 together coordinate CTP. 2 residues coordinate Mg(2+): Glu21 and Asp23. Residues Arg91, Arg137, and Arg140 each coordinate ATP. CTP-binding residues include Arg91, Arg137, and Arg140. The 102-residue stretch at 228 to 329 folds into the HD domain; that stretch reads AGTHTLMALD…VELFEGLDLF (102 aa).

The protein belongs to the tRNA nucleotidyltransferase/poly(A) polymerase family. Bacterial CCA-adding enzyme type 1 subfamily. In terms of assembly, monomer. Can also form homodimers and oligomers. Requires Mg(2+) as cofactor. The cofactor is Ni(2+).

It carries out the reaction a tRNA precursor + 2 CTP + ATP = a tRNA with a 3' CCA end + 3 diphosphate. The catalysed reaction is a tRNA with a 3' CCA end + 2 CTP + ATP = a tRNA with a 3' CCACCA end + 3 diphosphate. Catalyzes the addition and repair of the essential 3'-terminal CCA sequence in tRNAs without using a nucleic acid template. Adds these three nucleotides in the order of C, C, and A to the tRNA nucleotide-73, using CTP and ATP as substrates and producing inorganic pyrophosphate. tRNA 3'-terminal CCA addition is required both for tRNA processing and repair. Also involved in tRNA surveillance by mediating tandem CCA addition to generate a CCACCA at the 3' terminus of unstable tRNAs. While stable tRNAs receive only 3'-terminal CCA, unstable tRNAs are marked with CCACCA and rapidly degraded. The polypeptide is Multifunctional CCA protein (Halorhodospira halophila (strain DSM 244 / SL1) (Ectothiorhodospira halophila (strain DSM 244 / SL1))).